The chain runs to 415 residues: Squalene synthase 10 (415 aa).

A run of 2 helical transmembrane segments spans residues 281–301 (AIFRFCAIPQIMAIGTLALCF) and 392–412 (LIVILFIILAILYAYLSSNLP).

The protein belongs to the phytoene/squalene synthase family. Requires Mg(2+) as cofactor. The cofactor is Mn(2+).

The protein localises to the endoplasmic reticulum membrane. The catalysed reaction is 2 (2E,6E)-farnesyl diphosphate + NADH + H(+) = squalene + 2 diphosphate + NAD(+). The enzyme catalyses 2 (2E,6E)-farnesyl diphosphate + NADPH + H(+) = squalene + 2 diphosphate + NADP(+). It participates in terpene metabolism; lanosterol biosynthesis; lanosterol from farnesyl diphosphate: step 1/3. Component of the triterpene saponins (e.g. ginsenosides or panaxosides) and phytosterols biosynthetic pathways. Catalyzes the biosynthesis of squalene. This chain is Squalene synthase 10, found in Panax ginseng (Korean ginseng).